A 186-amino-acid polypeptide reads, in one-letter code: Bifunctional protein PyrR (186 aa).

The short motif at 101–113 is the PRPP-binding element; that stretch reads VVLVDDVLYTGRT.

The protein belongs to the purine/pyrimidine phosphoribosyltransferase family. PyrR subfamily.

It carries out the reaction UMP + diphosphate = 5-phospho-alpha-D-ribose 1-diphosphate + uracil. In terms of biological role, regulates the transcription of the pyrimidine nucleotide (pyr) operon in response to exogenous pyrimidines. Its function is as follows. Also displays a weak uracil phosphoribosyltransferase activity which is not physiologically significant. The chain is Bifunctional protein PyrR from Syntrophobacter fumaroxidans (strain DSM 10017 / MPOB).